The primary structure comprises 459 residues: MIKDPFARLGLDREILTVSQLNGRARVLLEDVFTNIWVEGEISNLARPASGHVYFTLKDSGAQVRCALFRNNAARVRQALKDGLAVKVRGKVSLFEGRGDYQLILDTVEPAGDGALRLAFDALKEKLSAEGLFSAERKVPLPAHPRRIGIISSPTGAVIRDIISVFRRRAPNIELTLIPTAVQGREAIPQIVRALKLADARGFDALILARGGGSLEDLWCFNEEAVARAVDACITPIVSAVGHETDVSISDFVADVRAPTPSAAAELLAPDASHLVRQVENLHRRLVMLMRNRLSHDRLRLEGMARRLRHPGERLRQQAQRLDDLDMRLRRAFERSLNTRRERLIRLETRLAGQHPGRQLALLRQRLESLAERLPRAMREGLKARRLQLQSQVQTLHVVSPLATLGRGYSILLDERGQAIRTAAQTHTGQRLTARLGEGQLQVRVEDNHLTPVTLSLLD.

The protein belongs to the XseA family. As to quaternary structure, heterooligomer composed of large and small subunits.

It is found in the cytoplasm. The catalysed reaction is Exonucleolytic cleavage in either 5'- to 3'- or 3'- to 5'-direction to yield nucleoside 5'-phosphates.. Its function is as follows. Bidirectionally degrades single-stranded DNA into large acid-insoluble oligonucleotides, which are then degraded further into small acid-soluble oligonucleotides. This chain is Exodeoxyribonuclease 7 large subunit, found in Pseudomonas fluorescens (strain SBW25).